A 465-amino-acid polypeptide reads, in one-letter code: Probable tRNA modification GTPase MnmE (465 aa).

Positions 23, 85, and 124 each coordinate (6S)-5-formyl-5,6,7,8-tetrahydrofolate. Positions 221–384 constitute a TrmE-type G domain; it reads GTKVCIIGKP…LNNCILDLSS (164 aa). GTP is bound by residues 231–236, 250–256, and 275–278; these read NVGKSS, TNFPGTT, and DTAG. Mg(2+) contacts are provided by Ser-235 and Thr-256. Residue Lys-465 coordinates (6S)-5-formyl-5,6,7,8-tetrahydrofolate.

Belongs to the TRAFAC class TrmE-Era-EngA-EngB-Septin-like GTPase superfamily. TrmE GTPase family. The cofactor is K(+).

The protein localises to the plastid. The protein resides in the chloroplast. In terms of biological role, exhibits a very high intrinsic GTPase hydrolysis rate. Involved in the addition of a carboxymethylaminomethyl (cmnm) group at the wobble position (U34) of certain tRNAs, forming tRNA-cmnm(5)s(2)U34. In Cyanidium caldarium (Red alga), this protein is Probable tRNA modification GTPase MnmE.